The primary structure comprises 565 residues: DNA-dependent metalloprotease SPRTN (565 aa).

The region spanning Arg-23 to His-130 is the SprT-like domain. His-88 contacts Zn(2+). Glu-89 is an active-site residue. Zn(2+) is bound by residues His-92 and His-107. A disordered region spans residues Glu-191 to Lys-219. Residues Pro-205 to His-215 show a composition bias toward polar residues. An SHP-box motif is present at residues Phe-231–Phe-239. The short motif at Ser-288–Leu-295 is the PIP-box element. The disordered stretch occupies residues Thr-349–Lys-389. 2 stretches are compositionally biased toward polar residues: residues Pro-351–Lys-361 and Leu-372–Ser-386. Residues Lys-436–Pro-463 form a UBZ4-type 1 zinc finger. Residues Cys-439, Cys-442, His-454, and Cys-458 each contribute to the Zn(2+) site. The Nuclear localization signal motif lies at Gln-476 to Ile-499. The UBZ4-type 2 zinc-finger motif lies at Lys-537–Asn-564. Zn(2+) is bound by residues Cys-540, Cys-543, His-555, and Cys-559.

It belongs to the Spartan family. In terms of assembly, homodimer. It depends on Zn(2+) as a cofactor. Autocatalytically cleaved in response to double-stranded DNA-binding: autocatalytic cleavage takes place in trans and leads to inactivation.

The protein resides in the nucleus. It is found in the chromosome. Its activity is regulated as follows. DNA-binding activates the protease activity: single-stranded DNA-binding specifically activates ability to cleave covalent DNA-protein cross-links (DPCs). In contrast, double-stranded DNA-binding specifically activates autocatalytic cleavage, and subsequent inactivation. In terms of biological role, DNA-dependent metalloendopeptidase that mediates the proteolytic cleavage of covalent DNA-protein cross-links (DPCs) during DNA synthesis, thereby playing a key role in maintaining genomic integrity. DPCs are highly toxic DNA lesions that interfere with essential chromatin transactions, such as replication and transcription, and which are induced by reactive agents, such as UV light or formaldehyde. Associates with the DNA replication machinery and specifically removes DPCs during DNA synthesis. Catalyzes proteolytic cleavage of the hmces DNA-protein cross-link following unfolding by the brip1/fancj helicase. Acts as a pleiotropic protease for DNA-binding proteins cross-linked with DNA, such as top1, top2a, histones H3 and H4. Mediates degradation of DPCs that are not ubiquitinated, while it is not able to degrade ubiquitinated DPCs. SPRTN activation requires polymerase collision with DPCs followed by helicase bypass of DPCs. May also act as a 'reader' of ubiquitinated pcna: facilitates chromatin association of rad18 and is required for efficient pcna monoubiquitination, promoting a feed-forward loop to enhance pcna ubiquitination and translesion DNA synthesis. Acts as a regulator of translesion DNA synthesis by recruiting vcp/p97 to sites of DNA damage. The polypeptide is DNA-dependent metalloprotease SPRTN (Xenopus laevis (African clawed frog)).